Here is a 343-residue protein sequence, read N- to C-terminus: Fructose-1,6-bisphosphatase, cytosolic (343 aa).

Mg(2+) contacts are provided by glutamate 71, glutamate 100, aspartate 121, leucine 123, and aspartate 124. Substrate-binding positions include 124 to 127 (DGSS), asparagine 215, tyrosine 247, tyrosine 267, and lysine 277. Glutamate 283 contributes to the Mg(2+) binding site.

The protein belongs to the FBPase class 1 family. It depends on Mg(2+) as a cofactor.

It is found in the cytoplasm. The catalysed reaction is beta-D-fructose 1,6-bisphosphate + H2O = beta-D-fructose 6-phosphate + phosphate. The polypeptide is Fructose-1,6-bisphosphatase, cytosolic (CFBP) (Saccharum hybrid (Sugarcane)).